The chain runs to 233 residues: Small ribosomal subunit protein uS2 (233 aa).

Belongs to the universal ribosomal protein uS2 family.

The chain is Small ribosomal subunit protein uS2 from Clostridium novyi (strain NT).